The primary structure comprises 249 residues: 2,3-bisphosphoglycerate-dependent phosphoglycerate mutase (249 aa).

Residues 10 to 17 (RHGESEWN), 23 to 24 (TG), Arg-62, 89 to 92 (ERHY), Lys-100, 116 to 117 (RR), and 185 to 186 (GN) contribute to the substrate site. The Tele-phosphohistidine intermediate role is filled by His-11. Catalysis depends on Glu-89, which acts as the Proton donor/acceptor.

The protein belongs to the phosphoglycerate mutase family. BPG-dependent PGAM subfamily. In terms of assembly, homodimer.

It catalyses the reaction (2R)-2-phosphoglycerate = (2R)-3-phosphoglycerate. It functions in the pathway carbohydrate degradation; glycolysis; pyruvate from D-glyceraldehyde 3-phosphate: step 3/5. Catalyzes the interconversion of 2-phosphoglycerate and 3-phosphoglycerate. In Hamiltonella defensa subsp. Acyrthosiphon pisum (strain 5AT), this protein is 2,3-bisphosphoglycerate-dependent phosphoglycerate mutase.